Reading from the N-terminus, the 178-residue chain is uncharacterized protein (178 aa).

The N-terminal stretch at 1–19 is a signal peptide; sequence MKKLLIVTMLFTLALSAQA.

Belongs to the opacity porin family.

This is an uncharacterized protein from Haemophilus influenzae (strain ATCC 51907 / DSM 11121 / KW20 / Rd).